We begin with the raw amino-acid sequence, 449 residues long: Tubulin beta-7 chain (449 aa).

Residues glutamine 11, glutamate 69, serine 138, glycine 142, threonine 143, glycine 144, asparagine 204, and asparagine 226 each coordinate GTP. Residue glutamate 69 participates in Mg(2+) binding. The disordered stretch occupies residues 422–449 (YQQYQDATADEEGEYEEEEAEYEQEETY). The span at 429–449 (TADEEGEYEEEEAEYEQEETY) shows a compositional bias: acidic residues.

Belongs to the tubulin family. Dimer of alpha and beta chains. A typical microtubule is a hollow water-filled tube with an outer diameter of 25 nm and an inner diameter of 15 nM. Alpha-beta heterodimers associate head-to-tail to form protofilaments running lengthwise along the microtubule wall with the beta-tubulin subunit facing the microtubule plus end conferring a structural polarity. Microtubules usually have 13 protofilaments but different protofilament numbers can be found in some organisms and specialized cells. Mg(2+) serves as cofactor.

It is found in the cytoplasm. The protein localises to the cytoskeleton. Functionally, tubulin is the major constituent of microtubules, a cylinder consisting of laterally associated linear protofilaments composed of alpha- and beta-tubulin heterodimers. Microtubules grow by the addition of GTP-tubulin dimers to the microtubule end, where a stabilizing cap forms. Below the cap, tubulin dimers are in GDP-bound state, owing to GTPase activity of alpha-tubulin. The protein is Tubulin beta-7 chain (TUBB7) of Arabidopsis thaliana (Mouse-ear cress).